A 230-amino-acid chain; its full sequence is Potassium/proton antiporter CemA (230 aa).

4 consecutive transmembrane segments (helical) span residues 7-27 (LPSL…SFSF), 106-126 (IILH…FFFL), 145-165 (LNDS…VGFH), and 181-201 (LGWA…PVIL).

Belongs to the CemA family.

It localises to the plastid. Its subcellular location is the chloroplast inner membrane. It catalyses the reaction K(+)(in) + H(+)(out) = K(+)(out) + H(+)(in). Functionally, contributes to K(+)/H(+) antiport activity by supporting proton efflux to control proton extrusion and homeostasis in chloroplasts in a light-dependent manner to modulate photosynthesis. Prevents excessive induction of non-photochemical quenching (NPQ) under continuous-light conditions. Indirectly promotes efficient inorganic carbon uptake into chloroplasts. This is Potassium/proton antiporter CemA from Lolium perenne (Perennial ryegrass).